A 164-amino-acid polypeptide reads, in one-letter code: Sorting nexin-3 (164 aa).

A disordered region spans residues 1–26; that stretch reads MSGKREFKSFGSTEETMFSQHHKIPS. Positions 10-26 are enriched in polar residues; the sequence is FGSTEETMFSQHHKIPS. The PX domain occupies 40–163; that stretch reads IEVRNPKTHV…IRFIEDDKFV (124 aa). A 1,2-diacyl-sn-glycero-3-phospho-(1D-myo-inositol-3-phosphate) is bound by residues R83, S85, K114, R120, and R129.

This sequence belongs to the sorting nexin family.

The protein localises to the cytoplasm. It localises to the golgi apparatus membrane. The protein resides in the prevacuolar compartment membrane. In terms of biological role, required for retention of late Golgi membrane proteins. Component of the retrieval machinery that functions by direct interaction with the cytosolic tails of certain TGN membrane proteins during the sorting/budding process at the prevacuolar compartment. Binds phosphatidylinositol 3-phosphate (PtdIns(P3)). The protein is Sorting nexin-3 (SNX3) of Candida glabrata (strain ATCC 2001 / BCRC 20586 / JCM 3761 / NBRC 0622 / NRRL Y-65 / CBS 138) (Yeast).